The sequence spans 161 residues: Protein-export protein SecB (161 aa).

It belongs to the SecB family. As to quaternary structure, homotetramer, a dimer of dimers. One homotetramer interacts with 1 SecA dimer.

The protein resides in the cytoplasm. Its function is as follows. One of the proteins required for the normal export of preproteins out of the cell cytoplasm. It is a molecular chaperone that binds to a subset of precursor proteins, maintaining them in a translocation-competent state. It also specifically binds to its receptor SecA. This is Protein-export protein SecB from Shewanella baltica (strain OS155 / ATCC BAA-1091).